Consider the following 474-residue polypeptide: Alkylcitrate dehydratase phiI (474 aa).

This sequence belongs to the PrpD family. Monomer.

It carries out the reaction (4E,11E)-2-hydroxytrideca-4,11-dien-1,2,3-tricarboxylate + 2 H(+) = [4-(deca-1,8-diyl)-2,5-dioxo-2,5-dihydro-3-furanyl]acetate + 2 H2O. It functions in the pathway secondary metabolite biosynthesis. Its function is as follows. Alkylcitrate dehydratasee; part of the gene cluster that mediates the biosynthesis of the antihypercholesterolemic agents phomoidrides which are dimeric anhydrides. Within the pathway, the alkylcitrate synthase (ACS) tstiJ and the alkylcitrate dehydratase (ACDH) tstI produce the decarboxylated monomeric anhydrides by coupling the C12-fatty acyl product from phiA with oxalacetic acid. The pathway begins with the highly reducing polyketide synthase tstA that catalyzes the formation of a C12-fatty acyl-ACP, starting from one acetate and 5 malonate units. The hydrolase tstM is involved in the release of the C12-fatty acyl chain from phiA. The alkylcitrate synthase (ACS) tstJ and the alkylcitrate dehydratase (ACDH) tstI then give rise to decarboxylated monomeric anhydrides by coupling the C12-fatty acyl chain with oxalacetic acid. The cyclase tstC is responsible for the dimerization of the monomeric anhydrides which leads to the production of prephomoidride that contains the characteristic bicyclo[4.3.1]deca-1,6-diene system of phomoidrides. Iterative oxidation catalyzed by the alpha-ketoglutarate-dependent dioxygenase tstK produced then phomoidride A. Finally, the methyltransferase tstE converts phomoidride A to phomoidride B via an acetalization reaction. The phosphatidylethanolamine-binding protein tstB and tstN are not essential for dimerization and their functions have still to be determined. This chain is Alkylcitrate dehydratase phiI, found in Talaromyces stipitatus (strain ATCC 10500 / CBS 375.48 / QM 6759 / NRRL 1006) (Penicillium stipitatum).